The primary structure comprises 297 residues: MAETPFHIPVLVNECLSWFSDRNPRSFCDVTVGAGGHAEAFLSTYPSIISYDGSDRDATALSLARERLEKFGDRVHLHHASFEDLAQDPKENVYDGILADLGVSSMQLDTLSRGFSFQGEDHDLDMRMDTSQGITASEVLNTLREEELGKIFREYGEEPHWKNVANAIVHFRRRKKIITVKDLKEATARVFPSYRLRKKIHPLTLIFQALRVYVNQEDVQLKVLLESAMRWLAPKGRLVIISFCSSEDRPVKWFFREAEKSGLGKILTKKVVMPTYEEIRRNPRCRSAKLRCFEKTS.

S-adenosyl-L-methionine-binding positions include 35–37 (GGH), Asp-55, Phe-82, Asp-100, and Gln-107.

The protein belongs to the methyltransferase superfamily. RsmH family.

The protein localises to the cytoplasm. The catalysed reaction is cytidine(1402) in 16S rRNA + S-adenosyl-L-methionine = N(4)-methylcytidine(1402) in 16S rRNA + S-adenosyl-L-homocysteine + H(+). Functionally, specifically methylates the N4 position of cytidine in position 1402 (C1402) of 16S rRNA. The chain is Ribosomal RNA small subunit methyltransferase H from Chlamydia caviae (strain ATCC VR-813 / DSM 19441 / 03DC25 / GPIC) (Chlamydophila caviae).